Consider the following 263-residue polypeptide: Neuferricin (263 aa).

A signal peptide spans 1–22 (MLRICGLGVVLSLAVAAVAVMA). The Cytochrome b5 heme-binding domain occupies 35–134 (IRLFLPEELA…KNYVFVGRLV (100 aa)). Residues 220 to 249 (VRTTGPPSDQQDNPRHSNHGDLDNPNLEEY) are disordered. The segment covering 231–241 (DNPRHSNHGDL) has biased composition (basic and acidic residues).

This sequence belongs to the cytochrome b5 family. MAPR subfamily. As to expression, expressed in various tissues including brain, heart, adrenal gland, and kidney. In the brain, mainly expressed in pyramidal cells around the CA3 region of Ammon horn in hippocampus. Present in brain (at protein level).

It localises to the secreted. Functionally, heme-binding protein which promotes neuronal but not astrocyte differentiation. The polypeptide is Neuferricin (Mus musculus (Mouse)).